The primary structure comprises 491 residues: MSLLMITENVKLAREYALLGNYDSAMVYYQGVLDQINKYLYSVKDTHLHQKWQQVWQEINVEAKHVKEIMKTLESFKLDSTSLKAAQHELPSSEGEVWSLPVPVERRPLPGPRKRQSTQHSDPKPHSNRPGAVVRAHRPSAQSLHSDRGKAVRSREKKEQSKGREEKNKLPAAVTEPEANKFDSTGYDKDLVEALERDIISQNPNVRWYDIADLVEAKKLLQEAVVLPMWMPEFFKGIRRPWKGVLMVGPPGTGKTLLAKAVATECKTTFFNVSSSTLTSKYRGESEKLVRLLFEMARFYSPATIFIDEIDSICSRRGTSEEHEASRRVKAELLVQMDGVGGASENDDPSKMVMVLAATNFPWDIDEALRRRLEKRIYIPLPSAKGREELLRISLRELELADDVNLASIAENMEGYSGADITNVCRDASLMAMRRRIEGLTPEEIRNLSREEMHMPTTMEDFEMALKKVSKSVSAADIERYEKWIVEFGSC.

Residues 1 to 29 (MSLLMITENVKLAREYALLGNYDSAMVYY) are interaction with KATNB1. Residues 1 to 75 (MSLLMITENV…VKEIMKTLES (75 aa)) form an interaction with dynein and NDEL1 region. Residues 1–185 (MSLLMITENV…EPEANKFDST (185 aa)) are interaction with microtubules. The residue at position 42 (Ser-42) is a Phosphoserine; by DYRK2. The tract at residues 87 to 183 (QHELPSSEGE…VTEPEANKFD (97 aa)) is disordered. A compositionally biased stretch (basic and acidic residues) spans 145-169 (HSDRGKAVRSREKKEQSKGREEKNK). Residue 249-256 (GPPGTGKT) participates in ATP binding.

The protein belongs to the AAA ATPase family. Katanin p60 subunit A1 subfamily. Can homooligomerize into hexameric rings, which may be promoted by interaction with microtubules. Interacts with KATNB1, which may serve as a targeting subunit. Interacts with ASPM; the katanin complex formation KATNA1:KATNB1 is required for the association of ASPM. Interacts with dynein and NDEL1. Associates with the E3 ligase complex containing DYRK2, EDD/UBR5, DDB1 and DCAF1 proteins (EDVP complex). Interacts with KLHL42 (via the kelch domains). Interacts with CUL3; the interaction is enhanced by KLHL42. Interacts with KATNB1 and KATNBL1. Post-translationally, phosphorylation by DYRK2 triggers ubiquitination and subsequent degradation. Ubiquitinated by the BCR(KLHL42) E3 ubiquitin ligase complex, leading to its proteasomal degradation. Ubiquitinated by the EDVP E3 ligase complex and subsequently targeted for proteasomal degradation.

It localises to the cytoplasm. Its subcellular location is the midbody. It is found in the cytoskeleton. The protein localises to the microtubule organizing center. The protein resides in the centrosome. It localises to the spindle pole. Its subcellular location is the spindle. It carries out the reaction n ATP + n H2O + a microtubule = n ADP + n phosphate + (n+1) alpha/beta tubulin heterodimers.. ATPase activity is stimulated by microtubules, which promote homooligomerization. ATP-dependent microtubule severing is stimulated by interaction with KATNB1. Catalytic subunit of a complex which severs microtubules in an ATP-dependent manner. Microtubule severing may promote rapid reorganization of cellular microtubule arrays and the release of microtubules from the centrosome following nucleation. Microtubule release from the mitotic spindle poles may allow depolymerization of the microtubule end proximal to the spindle pole, leading to poleward microtubule flux and poleward motion of chromosome. Microtubule release within the cell body of neurons may be required for their transport into neuronal processes by microtubule-dependent motor proteins. This transport is required for axonal growth. The protein is Katanin p60 ATPase-containing subunit A1 (Katna1) of Rattus norvegicus (Rat).